A 450-amino-acid polypeptide reads, in one-letter code: Phosphoglucosamine mutase (450 aa).

The active-site Phosphoserine intermediate is Ser101. Positions 101, 240, 242, and 244 each coordinate Mg(2+). Residue Ser101 is modified to Phosphoserine.

The protein belongs to the phosphohexose mutase family. The cofactor is Mg(2+). In terms of processing, activated by phosphorylation.

The catalysed reaction is alpha-D-glucosamine 1-phosphate = D-glucosamine 6-phosphate. Its function is as follows. Catalyzes the conversion of glucosamine-6-phosphate to glucosamine-1-phosphate. The sequence is that of Phosphoglucosamine mutase from Streptococcus gordonii (strain Challis / ATCC 35105 / BCRC 15272 / CH1 / DL1 / V288).